The following is a 200-amino-acid chain: Lipopolysaccharide core heptose(II)-phosphate phosphatase (200 aa).

An N-terminal signal peptide occupies residues 1 to 25 (MLAFCRSSLKSKKYFIILLALAAIA).

This sequence belongs to the phosphoglycerate mutase family. Ais subfamily.

The protein localises to the periplasm. It functions in the pathway bacterial outer membrane biogenesis; lipopolysaccharide metabolism. Catalyzes the dephosphorylation of heptose(II) of the outer membrane lipopolysaccharide core. This Escherichia coli O157:H7 protein is Lipopolysaccharide core heptose(II)-phosphate phosphatase.